The primary structure comprises 347 residues: Phenylalanine--tRNA ligase alpha subunit (347 aa).

Position 261 (Glu-261) interacts with Mg(2+).

Belongs to the class-II aminoacyl-tRNA synthetase family. Phe-tRNA synthetase alpha subunit type 1 subfamily. As to quaternary structure, tetramer of two alpha and two beta subunits. The cofactor is Mg(2+).

It is found in the cytoplasm. The catalysed reaction is tRNA(Phe) + L-phenylalanine + ATP = L-phenylalanyl-tRNA(Phe) + AMP + diphosphate + H(+). The protein is Phenylalanine--tRNA ligase alpha subunit of Streptococcus equi subsp. zooepidemicus (strain MGCS10565).